The primary structure comprises 385 residues: Probable alpha-galactosidase (385 aa).

An N-terminal signal peptide occupies residues M1 to A19. Intrachain disulfides connect C40/C72 and C119/C149. D147 serves as the catalytic Nucleophile. D180 to E184 is a binding site for substrate. D202 functions as the Proton donor in the catalytic mechanism.

It belongs to the glycosyl hydrolase 27 family.

It catalyses the reaction Hydrolysis of terminal, non-reducing alpha-D-galactose residues in alpha-D-galactosides, including galactose oligosaccharides, galactomannans and galactolipids.. This is Probable alpha-galactosidase (melA) from Dictyostelium discoideum (Social amoeba).